Reading from the N-terminus, the 457-residue chain is tRNA-2-methylthio-N(6)-dimethylallyladenosine synthase (457 aa).

One can recognise an MTTase N-terminal domain in the interval 2-119; that stretch reads KKVFIKTFGC…LPELIDARRR (118 aa). [4Fe-4S] cluster is bound by residues cysteine 11, cysteine 48, cysteine 82, cysteine 156, cysteine 160, and cysteine 163. Residues 142-375 enclose the Radical SAM core domain; sequence RVEGPSAFVS…QATIDANMAR (234 aa). The 71-residue stretch at 378–448 folds into the TRAM domain; the sequence is EGMVGSVQRI…PHSLRGDVVE (71 aa).

It belongs to the methylthiotransferase family. MiaB subfamily. As to quaternary structure, monomer. [4Fe-4S] cluster serves as cofactor.

Its subcellular location is the cytoplasm. The catalysed reaction is N(6)-dimethylallyladenosine(37) in tRNA + (sulfur carrier)-SH + AH2 + 2 S-adenosyl-L-methionine = 2-methylsulfanyl-N(6)-dimethylallyladenosine(37) in tRNA + (sulfur carrier)-H + 5'-deoxyadenosine + L-methionine + A + S-adenosyl-L-homocysteine + 2 H(+). Its function is as follows. Catalyzes the methylthiolation of N6-(dimethylallyl)adenosine (i(6)A), leading to the formation of 2-methylthio-N6-(dimethylallyl)adenosine (ms(2)i(6)A) at position 37 in tRNAs that read codons beginning with uridine. This chain is tRNA-2-methylthio-N(6)-dimethylallyladenosine synthase, found in Ralstonia nicotianae (strain ATCC BAA-1114 / GMI1000) (Ralstonia solanacearum).